We begin with the raw amino-acid sequence, 139 residues long: Probable transcription termination protein NusA (139 aa).

The region spanning 31 to 97 (DDRVVYVVTA…YNVTVSENDT (67 aa)) is the KH domain.

Belongs to the NusA family.

It localises to the cytoplasm. Functionally, participates in transcription termination. In Halobacterium salinarum (strain ATCC 29341 / DSM 671 / R1), this protein is Probable transcription termination protein NusA.